The primary structure comprises 400 residues: Endoplasmin (400 aa).

The residue at position 1 (lysine 1) is an N6-succinyllysine. Asparagine 42 is a glycosylation site (N-linked (GlcNAc...) asparagine). Residue serine 44 is modified to Phosphoserine. Lysine 76 carries the post-translational modification N6-acetyllysine. N-linked (GlcNAc...) asparagine glycans are attached at residues asparagine 78 and asparagine 99. Lysine 230 is modified (N6-succinyllysine). The disordered stretch occupies residues isoleucine 346–leucine 400. Positions alanine 350–glutamine 387 are enriched in acidic residues. The residue at position 379 (threonine 379) is a Phosphothreonine. Residues glutamate 388 to leucine 400 show a composition bias toward basic and acidic residues. The Prevents secretion from ER motif lies at lysine 397 to leucine 400.

The protein belongs to the heat shock protein 90 family. As to quaternary structure, homodimer; disulfide-linked. Component of an EIF2 complex at least composed of CELF1/CUGBP1, CALR, CALR3, EIF2S1, EIF2S2, HSP90B1 and HSPA5. Part of a large chaperone multiprotein complex comprising DNAJB11, HSP90B1, HSPA5, HYOU, PDIA2, PDIA4, PDIA6, PPIB, SDF2L1, UGGT1 and very small amounts of ERP29, but not, or at very low levels, CALR nor CANX. Interacts with AIMP1; regulates its retention in the endoplasmic reticulum. Hyperglycosylated form interacts with OS9; promoting its degradation by the endoplasmic reticulum associated degradation (ERAD). Interacts with CNPY3. This interaction is disrupted in the presence of ATP. Interacts with TLR4 and TLR9, but not with TLR3. Interacts with MZB1 in a calcium-dependent manner. Interacts with METTL23. Interacts with IL1B; the interaction facilitates cargo translocation into the ERGIC. Interacts with EIF2AK3. In terms of processing, phosphorylated by CK2. Post-translationally, N-glycosylated cotranslationally at Asn-217 by STT3A-containing OST-A complex: this glycosylation is constitutive. In response to various stress, 5 additional facultative sites (Asn-62, Asn-107, Asn-445, Asn-481 and Asn-502) can be glycosylated post-translationally by STT3B-containing OST-B complex, leading to a hyperglycosylated form that is degraded by the ER-associated degradation (ERAD) pathway. In normal conditions, the OST-A complex together with CCDC134 prevent glycosylation at facultative sites during protein folding, thereby preventing hyperglycosylation. Mechanistically, nascent HSP90B1 is tethered during translation to a specialized CCDC134-containing translocon that forms a microenvironment for its folding, in which STT3A associates with the SRT pseudosubstrate motif, and prevents access to facultative glycosylation sites until folding is completed, rendering its facultative sites inaccessible to the OST-B complex.

It localises to the endoplasmic reticulum lumen. The protein localises to the sarcoplasmic reticulum lumen. Its subcellular location is the melanosome. It catalyses the reaction ATP + H2O = ADP + phosphate + H(+). Functionally, ATP-dependent chaperone involved in the processing of proteins in the endoplasmic reticulum, regulating their transport. Together with MESD, acts as a modulator of the Wnt pathway by promoting the folding of LRP6, a coreceptor of the canonical Wnt pathway. When associated with CNPY3, required for proper folding of Toll-like receptors. Promotes folding and trafficking of TLR4 to the cell surface. May participate in the unfolding of cytosolic leaderless cargos (lacking the secretion signal sequence) such as the interleukin 1/IL-1 to facilitate their translocation into the ERGIC (endoplasmic reticulum-Golgi intermediate compartment) and secretion; the translocation process is mediated by the cargo receptor TMED10. The polypeptide is Endoplasmin (HSP90B1) (Mesocricetus auratus (Golden hamster)).